A 192-amino-acid chain; its full sequence is Probable cobalt-precorrin-6B C(15)-methyltransferase (decarboxylating) (192 aa).

Residues Thr20, 44–48 (GSGTG), Glu68, and Ala96 each bind S-adenosyl-L-methionine.

The protein belongs to the methyltransferase superfamily. Archaeal-type CbiT family.

The catalysed reaction is Co-precorrin-6B + S-adenosyl-L-methionine = Co-precorrin-7 + S-adenosyl-L-homocysteine + CO2. The protein operates within cofactor biosynthesis; adenosylcobalamin biosynthesis; cob(II)yrinate a,c-diamide from sirohydrochlorin (anaerobic route): step 8/10. Its function is as follows. Catalyzes the methylation of C-15 in cobalt-precorrin-6B followed by the decarboxylation of C-12 to form cobalt-precorrin-7. The sequence is that of Probable cobalt-precorrin-6B C(15)-methyltransferase (decarboxylating) from Sulfolobus acidocaldarius (strain ATCC 33909 / DSM 639 / JCM 8929 / NBRC 15157 / NCIMB 11770).